Reading from the N-terminus, the 277-residue chain is MEWWTAFQAFILGVVEGLTEFLPISSTGHQIIVADLIGFGGERAKAFNIIIQLAAILAVVWEFRGKIFQVVRDLPSQRQAQRFTANLLIAFFPAVVLGVLFADLIHEWLFNPITVALALVVGGVVMLWAERRKHVIHAEHVDDMTWKDALKIGCAQCLAMVPGTSRSGATIIGGLLFGLSRKAATEFSFFLAMPTMVGAAVYSGYKYRDLFRPEDLPVFAVGFVTSFVFAMVAVRALLKFIGNHSYAAFAWYRIAFGLLILATWQFHLIDWSTAGEM.

6 helical membrane-spanning segments follow: residues 47 to 67, 85 to 105, 108 to 128, 183 to 203, 218 to 238, and 249 to 269; these read FNII…RGKI, ANLL…ADLI, WLFN…VMLW, AATE…AVYS, VFAV…RALL, and FAWY…FHLI.

The protein belongs to the UppP family.

The protein resides in the cell inner membrane. It carries out the reaction di-trans,octa-cis-undecaprenyl diphosphate + H2O = di-trans,octa-cis-undecaprenyl phosphate + phosphate + H(+). Functionally, catalyzes the dephosphorylation of undecaprenyl diphosphate (UPP). Confers resistance to bacitracin. The sequence is that of Undecaprenyl-diphosphatase from Pseudomonas aeruginosa (strain UCBPP-PA14).